Here is a 490-residue protein sequence, read N- to C-terminus: Glutamate--tRNA ligase (490 aa).

The 'HIGH' region motif lies at 15–25 (PSPTGYLHVGG). Residues 259 to 263 (KLSKR) carry the 'KMSKS' region motif. K262 is an ATP binding site.

It belongs to the class-I aminoacyl-tRNA synthetase family. Glutamate--tRNA ligase type 1 subfamily. Monomer.

It localises to the cytoplasm. It catalyses the reaction tRNA(Glu) + L-glutamate + ATP = L-glutamyl-tRNA(Glu) + AMP + diphosphate. In terms of biological role, catalyzes the attachment of glutamate to tRNA(Glu) in a two-step reaction: glutamate is first activated by ATP to form Glu-AMP and then transferred to the acceptor end of tRNA(Glu). The protein is Glutamate--tRNA ligase of Bdellovibrio bacteriovorus (strain ATCC 15356 / DSM 50701 / NCIMB 9529 / HD100).